The following is a 379-amino-acid chain: Dual-specificity RNA methyltransferase RlmN (379 aa).

Glutamate 90 serves as the catalytic Proton acceptor. The 253-residue stretch at glutamate 96–aspartate 348 folds into the Radical SAM core domain. A disulfide bridge connects residues cysteine 103 and cysteine 353. Residues cysteine 110, cysteine 114, and cysteine 117 each contribute to the [4Fe-4S] cluster site. S-adenosyl-L-methionine-binding positions include glycine 179–glutamate 180, serine 211, serine 233–histidine 235, and asparagine 310. Residue cysteine 353 is the S-methylcysteine intermediate of the active site.

Belongs to the radical SAM superfamily. RlmN family. The cofactor is [4Fe-4S] cluster.

The protein localises to the cytoplasm. It catalyses the reaction adenosine(2503) in 23S rRNA + 2 reduced [2Fe-2S]-[ferredoxin] + 2 S-adenosyl-L-methionine = 2-methyladenosine(2503) in 23S rRNA + 5'-deoxyadenosine + L-methionine + 2 oxidized [2Fe-2S]-[ferredoxin] + S-adenosyl-L-homocysteine. The catalysed reaction is adenosine(37) in tRNA + 2 reduced [2Fe-2S]-[ferredoxin] + 2 S-adenosyl-L-methionine = 2-methyladenosine(37) in tRNA + 5'-deoxyadenosine + L-methionine + 2 oxidized [2Fe-2S]-[ferredoxin] + S-adenosyl-L-homocysteine. Its function is as follows. Specifically methylates position 2 of adenine 2503 in 23S rRNA and position 2 of adenine 37 in tRNAs. m2A2503 modification seems to play a crucial role in the proofreading step occurring at the peptidyl transferase center and thus would serve to optimize ribosomal fidelity. The protein is Dual-specificity RNA methyltransferase RlmN of Nitrosomonas europaea (strain ATCC 19718 / CIP 103999 / KCTC 2705 / NBRC 14298).